Here is a 595-residue protein sequence, read N- to C-terminus: Alpha-1,3-galactosidase B (595 aa).

A signal peptide spans 1 to 22 (MKTILLFALSLLLSLSVSDVCA). PbH1 repeat units lie at residues 432 to 454 (TPEV…LFST), 455 to 477 (PKKT…LLCG), and 488 to 541 (CRDV…VIED).

The protein belongs to the glycosyl hydrolase 110 family. B subfamily.

The enzyme catalyses Hydrolysis of terminal, non-reducing branched (1-&gt;3)-alpha-D-galactosidic residues, producing free D-galactose.. It catalyses the reaction Hydrolysis of terminal, non-reducing linear (1-&gt;3)-alpha-D-galactosidic residues, producing free D-galactose.. The catalysed reaction is Hydrolysis of terminal, non-reducing alpha-D-galactose residues in alpha-D-galactosides, including galactose oligosaccharides, galactomannans and galactolipids.. In terms of biological role, alpha-galactosidase. Removes both branched alpha-1,3-linked galactose residues of blood group B antigens and linear alpha-1,3-linked galactose structures. In Bacteroides fragilis (strain ATCC 25285 / DSM 2151 / CCUG 4856 / JCM 11019 / LMG 10263 / NCTC 9343 / Onslow / VPI 2553 / EN-2), this protein is Alpha-1,3-galactosidase B (glaB).